The primary structure comprises 294 residues: 3-methyl-2-oxobutanoate hydroxymethyltransferase 1 (294 aa).

D55 provides a ligand contact to Mg(2+). Residues 55–56 and K123 contribute to the 3-methyl-2-oxobutanoate site; that span reads DS. The active-site Proton acceptor is E192.

This sequence belongs to the PanB family. In terms of assembly, homodecamer; pentamer of dimers. The cofactor is Mg(2+).

It is found in the cytoplasm. It carries out the reaction 3-methyl-2-oxobutanoate + (6R)-5,10-methylene-5,6,7,8-tetrahydrofolate + H2O = 2-dehydropantoate + (6S)-5,6,7,8-tetrahydrofolate. The protein operates within cofactor biosynthesis; (R)-pantothenate biosynthesis; (R)-pantoate from 3-methyl-2-oxobutanoate: step 1/2. In terms of biological role, catalyzes the reversible reaction in which hydroxymethyl group from 5,10-methylenetetrahydrofolate is transferred onto alpha-ketoisovalerate to form ketopantoate. The protein is 3-methyl-2-oxobutanoate hydroxymethyltransferase 1 of Methylibium petroleiphilum (strain ATCC BAA-1232 / LMG 22953 / PM1).